A 388-amino-acid polypeptide reads, in one-letter code: Putative [LysW]-aminoadipate semialdehyde/glutamate semialdehyde transaminase (388 aa).

Pyridoxal 5'-phosphate-binding positions include 100 to 101 (GT) and Phe127. Residue Arg130 coordinates substrate. Pyridoxal 5'-phosphate is bound at residue 211–214 (DEIQ). Lys240 carries the post-translational modification N6-(pyridoxal phosphate)lysine. A substrate-binding site is contributed by Ser268. Residue Thr269 coordinates pyridoxal 5'-phosphate.

Belongs to the class-III pyridoxal-phosphate-dependent aminotransferase family. LysJ subfamily. Homodimer. It depends on pyridoxal 5'-phosphate as a cofactor.

The protein resides in the cytoplasm. The catalysed reaction is [amino-group carrier protein]-C-terminal-gamma-(L-lysyl)-L-glutamate + 2-oxoglutarate = [amino-group carrier protein]-C-terminal-N-(1-carboxy-5-oxopentan-1-yl)-L-glutamine + L-glutamate. The enzyme catalyses [amino-group carrier protein]-C-terminal-gamma-(L-ornithyl)-L-glutamate + 2-oxoglutarate = [amino-group carrier protein]-C-terminal-gamma-(L-glutamyl-5-semialdehyde)-L-glutamate + L-glutamate. It participates in amino-acid biosynthesis; L-lysine biosynthesis via AAA pathway; L-lysine from L-alpha-aminoadipate (Thermus route): step 4/5. The protein operates within amino-acid biosynthesis; L-arginine biosynthesis. Functionally, involved in both the arginine and lysine biosynthetic pathways. This Aeropyrum pernix (strain ATCC 700893 / DSM 11879 / JCM 9820 / NBRC 100138 / K1) protein is Putative [LysW]-aminoadipate semialdehyde/glutamate semialdehyde transaminase.